The primary structure comprises 782 residues: MKISSGAINFSTIPNQVKKLITSIREHTKNGFASKITSVKNTHASLNEKLKTGKSSSIEFALPQKIKDFFQPKDKNTLNKTLITVKNIKDTNNAGKKNISAEDVSKMNAAFMRKHIANQTCDYNYRVTGAAPLPGGVSVSANNRPTVSEGRTPPVSPSLSLQATSSPSSPAEWAKKLTDALLRQKAGETLTAADRDFSNADFRNITFSKILPTSFMKRDGDIIKGFNFSNSKFTYSDISHLHFDECRFTYSTLSDVVCSNTKFSNSDMNELTLQYSITTRQQPSFINTTLKNTFIRHKANLSGVILNEPDNSSPPSVSGGGNFIRLGDIWLQMPLLWSENAVDGFLNHEHNNGKSILMTIDSLPDKYSQEKVRAMEDLVKSLRGGRLTEACIRPVESSLVSVLAHPPYTQSALISEWLGPVQERFFAHQCQTYNDVPLPAPDTYYQQRILPVLLDSFDRNSAAMTTHSGLFNQVILHCMTGVDCTDGTRQKAAALYEQYLAHPAVSPHIHNGLFGNYDGSPDWTTRAADNFLLLSSQDSDTAMMLSTDTLLTMLNPTPDTAWDNFYLLRAGENVSTAQISPVELFRHDFPVFLAAFNQQATQRRFGELIDIILSTEEHGELNQQFIAATNQKHSTVKLIDDASVSRLATIFDPLLPEGKLSPAHYQHILSAYHLTDATPQKQAETLFCLSTAFARYSSSAIFGTEHDSPPALRGYAEALMQKAWELSPAIFPSSEQFTEWSDRFHGLHGAFTCTSVVADSMQRHARKYFPSVLSSILPLAWA.

Residues 140–170 (SANNRPTVSEGRTPPVSPSLSLQATSSPSSP) are disordered. Residues 157–170 (PSLSLQATSSPSSP) show a composition bias toward low complexity. The active-site Glycyl thioester intermediate is C753.

The protein belongs to the SopA E3 ligase family. Post-translationally, ubiquitinated in the presence of host E1 ubiquitin-activating enzyme, E2 ubiquitin-conjugating enzyme and ubiquitin.

It localises to the secreted. Its subcellular location is the host cell. It carries out the reaction S-ubiquitinyl-[E2 ubiquitin-conjugating enzyme]-L-cysteine + [acceptor protein]-L-lysine = [E2 ubiquitin-conjugating enzyme]-L-cysteine + N(6)-ubiquitinyl-[acceptor protein]-L-lysine.. Effector proteins function to alter host cell physiology and promote bacterial survival in host tissues. This protein is an E3 ubiquitin ligase that interferes with host's ubiquitination pathway. In Salmonella agona (strain SL483), this protein is E3 ubiquitin-protein ligase SopA (sopA).